Reading from the N-terminus, the 463-residue chain is Nitrogenase iron-molybdenum cofactor biosynthesis protein NifE (463 aa).

The protein belongs to the NifD/NifK/NifE/NifN family.

It functions in the pathway cofactor biosynthesis; Fe-Mo cofactor biosynthesis. Its function is as follows. This protein may play a role in the biosynthesis of the prosthetic group of nitrogenase (FeMo cofactor). This chain is Nitrogenase iron-molybdenum cofactor biosynthesis protein NifE (nifE2), found in Methanosarcina barkeri.